The following is a 551-amino-acid chain: Cation/acetate symporter ActP (551 aa).

The next 14 membrane-spanning stretches (helical) occupy residues 8–28 (ALAATLLPLGAHAADAITGAV), 35–55 (WQAIVMFLIFVALTLYITYWA), 78–98 (GLAIAGDFMSAASFLGISALV), 105–125 (GLIYSLGFLVGWPIILFLIAE), 151–171 (LSACGSLVVVALYLIAQMVGA), 185–205 (VAVVLVGVLMVLYVLFGGMLA), 208–228 (WVQIIKAVLLLCGASFMAFMV), 264–284 (ISALSLGLGLMFGTAGLPHIL), 305–325 (GFMGYFYILTFIIGFGAIMLV), 357–377 (LFLGFISAVAFATILAVVAGL), 406–426 (VSKITVLILGVVAILLGILFE), 430–450 (IAFMVGLAFSIAASCNFPIIL), 465–485 (VGGWLGLLTAVILMILGPTIW), and 496–516 (FPYEYPALFSIAIAFIGIWVF).

It belongs to the sodium:solute symporter (SSF) (TC 2.A.21) family.

It is found in the cell inner membrane. Transports acetate. In Klebsiella pneumoniae (strain 342), this protein is Cation/acetate symporter ActP.